Here is a 198-residue protein sequence, read N- to C-terminus: Recombination protein RecR (198 aa).

Residues 57–72 form a C4-type zinc finger; it reads CSICGNLTESDPCAIC. A Toprim domain is found at 80-175; that stretch reads TTILVVEESK…KVTRLARGLA (96 aa).

It belongs to the RecR family.

Functionally, may play a role in DNA repair. It seems to be involved in an RecBC-independent recombinational process of DNA repair. It may act with RecF and RecO. The polypeptide is Recombination protein RecR (Lactococcus lactis subsp. cremoris (strain MG1363)).